The following is a 165-amino-acid chain: UPF0254 protein MmarC5_0742 (165 aa).

The protein belongs to the UPF0254 family.

This chain is UPF0254 protein MmarC5_0742, found in Methanococcus maripaludis (strain C5 / ATCC BAA-1333).